The chain runs to 381 residues: Probable envelope ADP,ATP carrier protein, chloroplastic (381 aa).

A chloroplast-targeting transit peptide spans 1-26 (MEEDRAILTFHRIPSLNSSLITTSSP). A run of 5 helical transmembrane segments spans residues 78–98 (LAIL…ALAG), 154–179 (LPQV…NLFK), 191–211 (LAAG…LDVL), 237–257 (IASF…YIAV), and 281–301 (LLTA…LDTV). 3 Solcar repeats span residues 85-177 (PKDA…YKNL), 185-268 (LSVI…VKKS), and 279-359 (SSLL…VKRL). Arg-159 contacts ADP. Residue Arg-302 coordinates ADP. The helical transmembrane segment at 334–360 (GFLPNALKTLPNSSIRLTTFDMVKRLI) threads the bilayer.

Belongs to the mitochondrial carrier (TC 2.A.29) family.

Its subcellular location is the plastid. It localises to the chloroplast membrane. Transports adenine nucleotides. The chain is Probable envelope ADP,ATP carrier protein, chloroplastic (EAAC) from Arabidopsis thaliana (Mouse-ear cress).